The following is a 438-amino-acid chain: L-cysteine:1D-myo-inositol 2-amino-2-deoxy-alpha-D-glucopyranoside ligase (438 aa).

A disordered region spans residues 1–27; it reads MDSWTSPDVPALPFTAEGPRVHDTARG. A Zn(2+)-binding site is contributed by C45. L-cysteinyl-5'-AMP-binding positions include 45-48, T60, and 83-85; these read CGIT and NVT. Residues 47-57 carry the 'HIGH' region motif; it reads ITPYDATHLGH. The 'ERGGDP' region motif lies at 197–202; it reads DRGGDP. W238 is a binding site for L-cysteinyl-5'-AMP. Zn(2+) is bound at residue C242. 260–262 is a binding site for L-cysteinyl-5'-AMP; the sequence is GDD. H267 contacts Zn(2+). An L-cysteinyl-5'-AMP-binding site is contributed by V293. The 'KMSKS' region signature appears at 299-303; it reads KMSKS.

Belongs to the class-I aminoacyl-tRNA synthetase family. MshC subfamily. In terms of assembly, monomer. The cofactor is Zn(2+).

It carries out the reaction 1D-myo-inositol 2-amino-2-deoxy-alpha-D-glucopyranoside + L-cysteine + ATP = 1D-myo-inositol 2-(L-cysteinylamino)-2-deoxy-alpha-D-glucopyranoside + AMP + diphosphate + H(+). Catalyzes the ATP-dependent condensation of GlcN-Ins and L-cysteine to form L-Cys-GlcN-Ins. The chain is L-cysteine:1D-myo-inositol 2-amino-2-deoxy-alpha-D-glucopyranoside ligase from Kytococcus sedentarius (strain ATCC 14392 / DSM 20547 / JCM 11482 / CCUG 33030 / NBRC 15357 / NCTC 11040 / CCM 314 / 541) (Micrococcus sedentarius).